A 757-amino-acid polypeptide reads, in one-letter code: Transmembrane channel-like protein 1 (757 aa).

The segment at 1–74 is disordered; the sequence is MLQIQVEEKE…RRRLRRGAEE (74 aa). The Cytoplasmic portion of the chain corresponds to 1-176; that stretch reads MLQIQVEEKE…KIKAIESQFG (176 aa). Positions 8–23 are enriched in acidic residues; it reads EKEEDTEESSSEEEED. Ser-30 carries the phosphoserine modification. Thr-38 carries the phosphothreonine modification. Residues 43–54 are compositionally biased toward acidic residues; it reads NEDDPEPEPEDE. The tract at residues 81–130 is required for interaction with CIB2; that stretch reads EELERLKALLDENRQMIATVKCKPWKMEKKIEVLKEAKKFVSENEGALGK. Phosphoserine is present on Ser-122. The chain crosses the membrane as a helical span at residues 177 to 214; sequence SSVASYFLFLRWMYGVNMVLFVLTFSLIMLPEYLWGLP. At 215–265 the chain is on the extracellular side; sequence YGSLPRKTVPRAEEASAANFGVLYDFNGLAQYSVLFYGYYDNKRTIGWLNF. A helical transmembrane segment spans residues 266–297; the sequence is RLPLSYFLVGIMCIGYSFLVVLKAMTKNIGDD. Residues 298-352 are required for interaction with CIB2; that stretch reads GGGDDNTFNFSWKVFCSWDYLIGNPETADNKFNSITMNFKEAIIEERAAQVEENI. At 298–353 the chain is on the cytoplasmic side; the sequence is GGGDDNTFNFSWKVFCSWDYLIGNPETADNKFNSITMNFKEAIIEERAAQVEENIH. Ser-308 carries the post-translational modification Phosphoserine. A helical membrane pass occupies residues 354–384; sequence LIRFLRFLANFFVFLTLGASGYLIFWAVKRS. Residues 385–396 lie on the Extracellular side of the membrane; it reads QEFAQQDPDTLG. Thr-394 is modified (phosphothreonine). A helical membrane pass occupies residues 397–424; sequence WWEKNEMNMVMSLLGMFCPTLFDLFAEL. At 425–428 the chain is on the cytoplasmic side; that stretch reads EDYH. The helical transmembrane segment at 429–463 threads the bilayer; the sequence is PLIALKWLLGRIFALLLGNLYVFILALMDEINNKI. The Extracellular segment spans residues 464 to 512; it reads EEEKLVKANITLWEANMIKAYNESLSGLSGNTTGAPFFVHPADVPRGPC. The chain crosses the membrane as a helical span at residues 513 to 550; that stretch reads WETMVGQEFVRLTVSDVLTTYVTILIGDFLRACFVRFC. The Cytoplasmic portion of the chain corresponds to 551-569; the sequence is NYCWCWDLEYGYPSYTEFD. Residues 570–590 traverse the membrane as a helical segment; that stretch reads ISGNVLALIFNQGMIWMGSFF. Residues 591-593 are Extracellular-facing; that stretch reads APS. A helical transmembrane segment spans residues 594 to 616; sequence LPGINILRLHTSMYFQCWAVMCC. The Cytoplasmic segment spans residues 617–630; sequence NVPEARVFKASRSN. Residues 631–654 form a helical membrane-spanning segment; the sequence is NFYLGMLLLILFLSTMPVLYMIVS. Over 655 to 697 the chain is Extracellular; it reads LPPSFDCGPFSGKNRMFEVIGETLEHDFPSWMAKILRQLSNPG. The chain crosses the membrane as a helical span at residues 698–731; that stretch reads LVIAVILVMVLTIYYLNATAKGQKAANLDLKKKM. Residues 732-757 lie on the Cytoplasmic side of the membrane; sequence KQQALENKMRNKKMAAARAAAAAGGQ.

The protein belongs to the TMC family. In terms of assembly, forms the MET channel composed of TMC dimer (TMC1 or TMC2), TMIE, TOMT, CIB (CIB2 or CIB3), LHFPL5 and PCDH15. Interacts with PIEZO1 and PIEZO2; the interaction may be part of the MET complex. The interaction of TMC1 and TMC2 with TOMT is required for the transportation of TMC1/2 into the stereocilia of hair cells. Interacts (via N-terminus) with both isoforms CD1 and CD3 of PCDH15. Can form a heterodimer with TMC2, TMC5 or TMC7. Detected in cochlear inner and outer hair cells and in neurosensory epithelia of the vestibular end organs. Also expressed in cortex, cerebellum, eye, colon, ovary and testis.

The protein resides in the cell membrane. It carries out the reaction Ca(2+)(in) = Ca(2+)(out). Functionally, pore-forming subunit of the mechanotransducer (MET) non-selective cation channel complex located at the tips of stereocilia of cochlear hair cells and that mediates sensory transduction in the auditory system. The MET complex is composed of two dimeric pore-forming ion-conducting transmembrane TMC (TMC1 or TMC2) subunits, several auxiliary proteins including LHFPL5, TMIE, CIB2/3 and TOMT, the tip-link PCDH15, and possibly the PIEZO subunits. MET channel is activated by tension in the tip-link extending from the side wall of one stereocilium to the tip of the adjacent shorter stereocilium, where the channel is located. TMC1 MET channel is highly permeable to calcium and likely transports monovalent cations. Also involved in vestibular hair cells transduction current. The protein is Transmembrane channel-like protein 1 of Mus musculus (Mouse).